The following is a 391-amino-acid chain: Na(+)/H(+) antiporter NhaA 1 (391 aa).

11 helical membrane-spanning segments follow: residues 25–45, 56–76, 98–118, 128–148, 157–177, 180–200, 208–228, 264–284, 297–317, 335–355, and 364–384; these read AGGI…NSPL, VWLG…IFFL, ALPG…YIAI, GWAI…SLLG, VFLA…IAFF, AGLN…LIVM, LLPY…SGVH, VAFA…LAGI, VALG…VLAI, GVAM…NLAF, and EVKV…IVLL.

This sequence belongs to the NhaA Na(+)/H(+) (TC 2.A.33) antiporter family.

The protein localises to the cell inner membrane. It catalyses the reaction Na(+)(in) + 2 H(+)(out) = Na(+)(out) + 2 H(+)(in). Its function is as follows. Na(+)/H(+) antiporter that extrudes sodium in exchange for external protons. This is Na(+)/H(+) antiporter NhaA 1 from Pseudomonas syringae pv. syringae (strain B728a).